The following is a 473-amino-acid chain: Photosystem II CP43 reaction center protein (473 aa).

Residues 1 to 14 (MKTLYSPRRFYPVE) constitute a propeptide that is removed on maturation. Position 15 is an N-acetylthreonine (Thr-15). Thr-15 is subject to Phosphothreonine. Helical transmembrane passes span 69–93 (LFEVAHFIPEKPMYEQGLILLPHLA), 134–155 (LIGPETLEESFPFFGYAWKDRN), 178–200 (KALFFGGIYDTWAPGGGDVRKIT), 255–275 (KPFAWTRRAFVWSGEAYLSYS), and 291–312 (WFNNTAYPSEFYGPTGPEASQA). Glu-367 contributes to the [CaMn4O5] cluster binding site. Residues 447 to 471 (RARAAAAGFEKGIDRDLEPVLFMTP) traverse the membrane as a helical segment.

This sequence belongs to the PsbB/PsbC family. PsbC subfamily. PSII is composed of 1 copy each of membrane proteins PsbA, PsbB, PsbC, PsbD, PsbE, PsbF, PsbH, PsbI, PsbJ, PsbK, PsbL, PsbM, PsbT, PsbX, PsbY, PsbZ, Psb30/Ycf12, at least 3 peripheral proteins of the oxygen-evolving complex and a large number of cofactors. It forms dimeric complexes. Requires Binds multiple chlorophylls and provides some of the ligands for the Ca-4Mn-5O cluster of the oxygen-evolving complex. It may also provide a ligand for a Cl- that is required for oxygen evolution. PSII binds additional chlorophylls, carotenoids and specific lipids. as cofactor.

Its subcellular location is the plastid. The protein localises to the chloroplast thylakoid membrane. Functionally, one of the components of the core complex of photosystem II (PSII). It binds chlorophyll and helps catalyze the primary light-induced photochemical processes of PSII. PSII is a light-driven water:plastoquinone oxidoreductase, using light energy to abstract electrons from H(2)O, generating O(2) and a proton gradient subsequently used for ATP formation. This Welwitschia mirabilis (Tree tumbo) protein is Photosystem II CP43 reaction center protein.